Here is a 407-residue protein sequence, read N- to C-terminus: Peptidase T (407 aa).

Position 82 (His-82) interacts with Zn(2+). Asp-84 is a catalytic residue. Asp-143 is a Zn(2+) binding site. Glu-177 acts as the Proton acceptor in catalysis. Residues Glu-178, Asp-200, and His-382 each coordinate Zn(2+).

This sequence belongs to the peptidase M20B family. Zn(2+) serves as cofactor.

The protein localises to the cytoplasm. The catalysed reaction is Release of the N-terminal residue from a tripeptide.. Its function is as follows. Cleaves the N-terminal amino acid of tripeptides. The polypeptide is Peptidase T (Streptococcus pyogenes serotype M18 (strain MGAS8232)).